We begin with the raw amino-acid sequence, 181 residues long: Adenylyl-sulfate kinase (181 aa).

Position 20–27 (20–27 (GLSGAGKS)) interacts with ATP. Ser-94 functions as the Phosphoserine intermediate in the catalytic mechanism.

The protein belongs to the APS kinase family.

The catalysed reaction is adenosine 5'-phosphosulfate + ATP = 3'-phosphoadenylyl sulfate + ADP + H(+). It functions in the pathway sulfur metabolism; hydrogen sulfide biosynthesis; sulfite from sulfate: step 2/3. Functionally, catalyzes the synthesis of activated sulfate. This chain is Adenylyl-sulfate kinase, found in Deinococcus deserti (strain DSM 17065 / CIP 109153 / LMG 22923 / VCD115).